A 255-amino-acid chain; its full sequence is Triosephosphate isomerase (255 aa).

9–11 (NWK) contributes to the substrate binding site. Histidine 95 acts as the Electrophile in catalysis. Glutamate 167 functions as the Proton acceptor in the catalytic mechanism. Substrate contacts are provided by residues glycine 173, serine 212, and 233 to 234 (GG).

It belongs to the triosephosphate isomerase family. Homodimer.

It localises to the cytoplasm. It catalyses the reaction D-glyceraldehyde 3-phosphate = dihydroxyacetone phosphate. The protein operates within carbohydrate biosynthesis; gluconeogenesis. It functions in the pathway carbohydrate degradation; glycolysis; D-glyceraldehyde 3-phosphate from glycerone phosphate: step 1/1. Functionally, involved in the gluconeogenesis. Catalyzes stereospecifically the conversion of dihydroxyacetone phosphate (DHAP) to D-glyceraldehyde-3-phosphate (G3P). The sequence is that of Triosephosphate isomerase from Serratia proteamaculans (strain 568).